A 511-amino-acid chain; its full sequence is Bifunctional purine biosynthesis protein PurH (511 aa).

Positions M1–T146 constitute an MGS-like domain.

Belongs to the PurH family.

The catalysed reaction is (6R)-10-formyltetrahydrofolate + 5-amino-1-(5-phospho-beta-D-ribosyl)imidazole-4-carboxamide = 5-formamido-1-(5-phospho-D-ribosyl)imidazole-4-carboxamide + (6S)-5,6,7,8-tetrahydrofolate. It catalyses the reaction IMP + H2O = 5-formamido-1-(5-phospho-D-ribosyl)imidazole-4-carboxamide. It functions in the pathway purine metabolism; IMP biosynthesis via de novo pathway; 5-formamido-1-(5-phospho-D-ribosyl)imidazole-4-carboxamide from 5-amino-1-(5-phospho-D-ribosyl)imidazole-4-carboxamide (10-formyl THF route): step 1/1. The protein operates within purine metabolism; IMP biosynthesis via de novo pathway; IMP from 5-formamido-1-(5-phospho-D-ribosyl)imidazole-4-carboxamide: step 1/1. The polypeptide is Bifunctional purine biosynthesis protein PurH (Synechocystis sp. (strain ATCC 27184 / PCC 6803 / Kazusa)).